Reading from the N-terminus, the 633-residue chain is E3 ubiquitin-protein ligase ZSWIM2 (633 aa).

Residues 54 to 87 (FRVFLGNPHVCNCSTFPKGGELCKHICWVLLKKF) form an SWIM-type zinc finger. The RING-type 1 zinc finger occupies 147-198 (CSICQELLLEKKLPVTFCRFGCGNSIHIKCMKILANYQSTSNTSMLKCPLCR). Residues 229 to 280 (HLGIPCNNCKQFPIEGKCYKCTECIEYHLCQECFDSCCHLSHTFTFREKRNQ) form a ZZ-type zinc finger. C234, C237, C249, C252, C258, C261, H267, and H270 together coordinate Zn(2+). An RING-type 2 zinc finger spans residues 344–388 (CLLCLKAFHLGQHTRLLPCTHKFHRKCIDNWLFHKCNSCPIDGQV).

Dimer. Interacts with UBE2D1. In terms of processing, polyubiquitinated. Polyubiquitination is followed by degradation via the proteasome. As to expression, expression is testis-specific.

It catalyses the reaction S-ubiquitinyl-[E2 ubiquitin-conjugating enzyme]-L-cysteine + [acceptor protein]-L-lysine = [E2 ubiquitin-conjugating enzyme]-L-cysteine + N(6)-ubiquitinyl-[acceptor protein]-L-lysine.. Its function is as follows. E3 ubiquitin-protein ligase involved in the regulation of Fas-, DR3- and DR4-mediated apoptosis. Functions in conjunction with the UBE2D1, UBE2D3 and UBE2E1 E2 ubiquitin-conjugating enzymes. This chain is E3 ubiquitin-protein ligase ZSWIM2, found in Homo sapiens (Human).